A 195-amino-acid chain; its full sequence is Imidazoleglycerol-phosphate dehydratase (195 aa).

Belongs to the imidazoleglycerol-phosphate dehydratase family.

The protein resides in the cytoplasm. It carries out the reaction D-erythro-1-(imidazol-4-yl)glycerol 3-phosphate = 3-(imidazol-4-yl)-2-oxopropyl phosphate + H2O. Its pathway is amino-acid biosynthesis; L-histidine biosynthesis; L-histidine from 5-phospho-alpha-D-ribose 1-diphosphate: step 6/9. This Burkholderia thailandensis (strain ATCC 700388 / DSM 13276 / CCUG 48851 / CIP 106301 / E264) protein is Imidazoleglycerol-phosphate dehydratase.